A 231-amino-acid polypeptide reads, in one-letter code: NADH-ubiquinone oxidoreductase chain 4 (231 aa).

Helical transmembrane passes span P1–I21, M34–L54, I63–G85, A89–Y111, I128–P148, and L156–S176.

The protein belongs to the complex I subunit 4 family.

The protein resides in the mitochondrion membrane. It catalyses the reaction a ubiquinone + NADH + 5 H(+)(in) = a ubiquinol + NAD(+) + 4 H(+)(out). In terms of biological role, core subunit of the mitochondrial membrane respiratory chain NADH dehydrogenase (Complex I) that is believed to belong to the minimal assembly required for catalysis. Complex I functions in the transfer of electrons from NADH to the respiratory chain. The immediate electron acceptor for the enzyme is believed to be ubiquinone. This is NADH-ubiquinone oxidoreductase chain 4 (MT-ND4) from Trimeresurus stejnegeri (Chinese green tree viper).